The sequence spans 294 residues: Shikimate dehydrogenase (NADP(+)) (294 aa).

Residues 22–24 and serine 69 contribute to the shikimate site; that span reads SLS. Catalysis depends on lysine 73, which acts as the Proton acceptor. Residues asparagine 94 and aspartate 111 each contribute to the shikimate site. NADP(+) contacts are provided by residues 135–139 and leucine 236; that span reads GAGGA. Shikimate is bound at residue tyrosine 238. Residue glycine 260 coordinates NADP(+).

Belongs to the shikimate dehydrogenase family. Homodimer.

The catalysed reaction is shikimate + NADP(+) = 3-dehydroshikimate + NADPH + H(+). Its pathway is metabolic intermediate biosynthesis; chorismate biosynthesis; chorismate from D-erythrose 4-phosphate and phosphoenolpyruvate: step 4/7. Its function is as follows. Involved in the biosynthesis of the chorismate, which leads to the biosynthesis of aromatic amino acids. Catalyzes the reversible NADPH linked reduction of 3-dehydroshikimate (DHSA) to yield shikimate (SA). The chain is Shikimate dehydrogenase (NADP(+)) from Streptococcus equi subsp. zooepidemicus (strain H70).